The chain runs to 326 residues: Malate dehydrogenase (326 aa).

An NAD(+)-binding site is contributed by 12–18 (GGTGQIA). 2 residues coordinate substrate: Arg93 and Arg99. NAD(+)-binding positions include Asn106, Gln113, and 130–132 (VGN). Residues Asn132 and Arg163 each contribute to the substrate site. Residue His188 is the Proton acceptor of the active site.

The protein belongs to the LDH/MDH superfamily. MDH type 2 family.

The enzyme catalyses (S)-malate + NAD(+) = oxaloacetate + NADH + H(+). Catalyzes the reversible oxidation of malate to oxaloacetate. The sequence is that of Malate dehydrogenase from Chlamydia trachomatis serovar L2 (strain ATCC VR-902B / DSM 19102 / 434/Bu).